A 210-amino-acid polypeptide reads, in one-letter code: Cytochrome c oxidase subunit 2 (210 aa).

Residues 1-15 (MSFILTFWMIFLMDS) lie on the Mitochondrial intermembrane side of the membrane. A helical transmembrane segment spans residues 16–36 (IIVLISFSIFLSVWICALIIA). Residues 37–63 (TVLTVTKINNIYCTWDFISSKFIDTYW) are Mitochondrial matrix-facing. A helical membrane pass occupies residues 64-84 (FVLGMMFILCLLLRLCLLLYF). Residues 85-210 (SCINFVSFDL…GFMPIVINFI (126 aa)) lie on the Mitochondrial intermembrane side of the membrane. Cu cation-binding residues include His-157, Cys-192, Glu-194, Cys-196, His-200, and Met-203. Glu-194 serves as a coordination point for Mg(2+).

The protein belongs to the cytochrome c oxidase subunit 2 family. As to quaternary structure, component of the cytochrome c oxidase (complex IV, CIV), a multisubunit enzyme composed of a catalytic core of 3 subunits and several supernumerary subunits. The complex exists as a monomer or a dimer and forms supercomplexes (SCs) in the inner mitochondrial membrane with ubiquinol-cytochrome c oxidoreductase (cytochrome b-c1 complex, complex III, CIII). Cu cation serves as cofactor.

The protein localises to the mitochondrion inner membrane. The catalysed reaction is 4 Fe(II)-[cytochrome c] + O2 + 8 H(+)(in) = 4 Fe(III)-[cytochrome c] + 2 H2O + 4 H(+)(out). In terms of biological role, component of the cytochrome c oxidase, the last enzyme in the mitochondrial electron transport chain which drives oxidative phosphorylation. The respiratory chain contains 3 multisubunit complexes succinate dehydrogenase (complex II, CII), ubiquinol-cytochrome c oxidoreductase (cytochrome b-c1 complex, complex III, CIII) and cytochrome c oxidase (complex IV, CIV), that cooperate to transfer electrons derived from NADH and succinate to molecular oxygen, creating an electrochemical gradient over the inner membrane that drives transmembrane transport and the ATP synthase. Cytochrome c oxidase is the component of the respiratory chain that catalyzes the reduction of oxygen to water. Electrons originating from reduced cytochrome c in the intermembrane space (IMS) are transferred via the dinuclear copper A center (CU(A)) of subunit 2 and heme A of subunit 1 to the active site in subunit 1, a binuclear center (BNC) formed by heme A3 and copper B (CU(B)). The BNC reduces molecular oxygen to 2 water molecules using 4 electrons from cytochrome c in the IMS and 4 protons from the mitochondrial matrix. The polypeptide is Cytochrome c oxidase subunit 2 (COXII) (Trypanosoma brucei brucei).